The following is a 953-amino-acid chain: Nucleotide-binding oligomerization domain-containing protein 1 (953 aa).

The CARD domain occupies Gly-15–Ile-107. The NACHT domain occupies Glu-196–Ala-531. Gly-202–Ser-209 is a binding site for ATP. S-palmitoyl cysteine attachment occurs at residues Cys-558 and Cys-567. LRR repeat units lie at residues Phe-702–Pro-725, Phe-727–Glu-750, Tyr-755–Gln-778, Cys-783–Leu-806, His-839–Gln-862, Asn-867–Glu-890, Asn-895–Arg-918, and Asn-923–Asn-946. Cys-952 carries S-palmitoyl cysteine lipidation.

The protein belongs to the NOD1-NOD2 family. In terms of assembly, homooligomer: homooligomerizes following ligand-binding, promoting RIPK2 recruitment. Interacts (via CARD domain) with RIPK2 (via CARD domain). Following RIPK2 recruitment, RIPK2 homooligomerizes via its CARD domain and forms long filaments named RIPosomes. Interacts (via CARD domain) with ubiquitin; inhibiting interaction with RIPK2. Interacts with ARHGEF2. Interacts with NLRP10 and recruits it to the cell membrane following invasive bacterial infection. Interacts with IFIH1; this interaction promotes transcription of antiviral genes and inhibition of viral replication. Interacts with Irgm1; promoting NOD1 degradation. Interacts with ATG16L1. Ubiquitinated. 'Lys-48'-linked polyubiquitination by RNF34 promotes proteasomal degradation and thereby negatively regulates NOD1 for instance in NF-kappa-B activation. In terms of processing, palmitoylated. Palmitoylation is required for proper recruitment to the bacterial entry site and hence for proper signaling upon cognate peptidoglycan detection. Post-translationally, degraded via selective autophagy following interaction with Irgm1. Irgm1 promotes NOD1-RIPK2 RIPosome recruitment to autophagosome membranes, promoting their SQSTM1/p62-dependent autophagic degradation. Although ubiquitously expressed, NOD1 levels are more abundant in immune cells, the gastrointestinal tract, and adipose tissue.

It localises to the cell membrane. The protein localises to the apical cell membrane. It is found in the basolateral cell membrane. The protein resides in the cytoplasm. Its function is as follows. Pattern recognition receptor (PRR) that detects bacterial peptidoglycan fragments and other danger signals and thus participates in both innate and adaptive immune responses. Specifically recognizes and binds gamma-D-glutamyl-meso-diaminopimelic acid (iE-DAP), a dipeptide present in peptidoglycan of Gram-negative bacteria. Preferentially binds iE-DAP in tetrapeptide-containing muropeptides (MurNAc-TetraDAP or TetraDAP). Ligand binding triggers oligomerization that facilitates the binding and subsequent activation of the proximal adapter receptor-interacting RIPK2. Following recruitment, RIPK2 undergoes 'Met-1'- (linear) and 'Lys-63'-linked polyubiquitination by E3 ubiquitin-protein ligases XIAP, BIRC2, BIRC3 and the LUBAC complex, becoming a scaffolding protein for downstream effectors, triggering activation of the NF-kappa-B and MAP kinases signaling. This in turn leads to the transcriptional activation of hundreds of genes involved in immune response. Also acts as a regulator of antiviral response elicited by dsRNA and the expression of RLR pathway members by targeting IFIH1 and TRAF3 to modulate the formation of IFIH1-MAVS and TRAF3-MAVS complexes leading to increased transcription of type I IFNs. Also acts as a regulator of autophagy via its interaction with ATG16L1, possibly by recruiting ATG16L1 at the site of bacterial entry. Besides recognizing pathogens, also involved in the endoplasmic reticulum stress response: acts by sensing and binding to the cytosolic metabolite sphingosine-1-phosphate generated in response to endoplasmic reticulum stress, initiating an inflammation process that leads to activation of the NF-kappa-B and MAP kinases signaling. In addition, plays a role in insulin trafficking in beta cells in a cell-autonomous manner. Mechanistically, upon recognizing cognate ligands, NOD1 and RIPK2 localize to insulin vesicles where they recruit RAB1A to direct insulin trafficking through the cytoplasm. In Mus musculus (Mouse), this protein is Nucleotide-binding oligomerization domain-containing protein 1.